Reading from the N-terminus, the 78-residue chain is Omega-conotoxin-like ArMKLT1-011 (78 aa).

Residues 1 to 22 (MKLTCMMIVAVLFLTAWTSVTA) form the signal peptide. The propeptide occupies 23-48 (VNTRGELENLFLRASHEMNSEASKLD). 3 disulfide bridges follow: cysteine 52/cysteine 69, cysteine 59/cysteine 73, and cysteine 68/cysteine 77.

The protein belongs to the conotoxin O1 superfamily. In terms of tissue distribution, expressed by the venom duct.

It is found in the secreted. Omega-conotoxins act at presynaptic membranes, they bind and block voltage-gated calcium channels (Cav). The protein is Omega-conotoxin-like ArMKLT1-011 of Conus arenatus (Sand-dusted cone).